The sequence spans 1132 residues: Telomerase reverse transcriptase (1132 aa).

The interval 1 to 230 (MPRAPRCRAV…ARRRGGSASR (230 aa)) is RNA-interacting domain 1. Residues 58-197 (VPWDARPPPA…PHASGPRRRL (140 aa)) form a GQ motif region. A required for regulating specificity for telomeric DNA and for processivity for primer elongation region spans residues 137-141 (WGLLL). A disordered region spans residues 210-320 (AGVPLGLPAP…SRPPRPWDTP (111 aa)). The segment covering 213 to 234 (PLGLPAPGARRRGGSASRSLPL) has biased composition (low complexity). Residues 222–240 (RRRGGSASRSLPLPKRPRR) carry the Bipartite nuclear localization signal motif. Residue Ser-227 is modified to Phosphoserine; by PKB/AKT1. A linker region spans residues 231–324 (SLPLPKRPRR…RPWDTPCPPV (94 aa)). A compositionally biased stretch (basic residues) spans 293–304 (RHSHPSVGRQHH). A required for oligomerization region spans residues 301-538 (RQHHAGPPST…VPAAEHRLRE (238 aa)). Residues 310–320 (TSRPPRPWDTP) are compositionally biased toward pro residues. The segment at 325-550 (YAETKHFLYS…LAKFLHWLMS (226 aa)) is RNA-interacting domain 2. A TFLY; involved in RNA binding motif is present at residues 328–333 (TKHFLY). The QFP motif stretch occupies residues 376-521 (PRRLPRLPQR…MSVRDCAWLR (146 aa)). The tract at residues 397 to 417 (LGNHAQCPYGVLLKTHCPLRA) is CP motif. Phosphoserine; by DYRK2 is present on Ser-457. The Reverse transcriptase domain maps to 605–935 (EVRQHREARP…GLFPWCGLLL (331 aa)). Tyr-707 bears the Phosphotyrosine; by SRC-type Tyr-kinases mark. Mg(2+) contacts are provided by Asp-712, Asp-868, and Asp-869. A required for oligomerization region spans residues 914-928 (LGGTAFVQMPAHGLF). The tract at residues 930-934 (WCGLL) is primer grip sequence. The segment at 936-1132 (DTRTLEVQSD…LPSDFKTILD (197 aa)) is CTE.

The protein belongs to the reverse transcriptase family. Telomerase subfamily. In terms of assembly, catalytic component of the telomerase holoenzyme complex composed of one molecule of TERT, one molecule of WRAP53/TCAB1, two molecules of H/ACA ribonucleoprotein complex subunits DKC1, NOP10, NHP2 and GAR1, and a telomerase RNA template component (TERC). The telomerase holoenzyme complex is associated with TEP1, SMG6/EST1A and POT1. The molecular chaperone HSP90/P23 complex is required for correct assembly and stabilization of the active telomerase. Interacts directly with HSP90A and PTGES3. Interacts with HSPA1A; the interaction occurs in the absence of TERC and dissociates once the complex has formed. Interacts with RAN; the interaction promotes nuclear export of TERT. Interacts with XPO1. Interacts with PTPN11; the interaction retains TERT in the nucleus. Interacts with NCL (via RRM1 and C-terminal RRM4/Arg/Gly-rich domains); the interaction is important for nucleolar localization of TERT. Interacts with SMARCA4 (via the bromodomain); the interaction regulates Wnt-mediated signaling. Interacts with MCRS1 (isoform MCRS2); the interaction inhibits in vitro telomerase activity. Interacts with PIF1; the interaction has no effect on the elongation activity of TERT. Interacts with PML; the interaction recruits TERT to PML bodies and inhibits telomerase activity. Interacts with GNL3L. Interacts with isoform 1 and isoform 2 of NVL. Interacts with DHX36. Interacts with ATF7. Phosphorylation at Tyr-707 under oxidative stress leads to translocation of TERT to the cytoplasm and reduces its antiapoptotic activity. Dephosphorylated by SHP2/PTPN11 leading to nuclear retention. Phosphorylation at Ser-227 by the AKT pathway promotes nuclear location. Phosphorylation at the G2/M phase at Ser-457 by DYRK2 promotes ubiquitination by the EDVP complex and degradation. In terms of processing, ubiquitinated by the EDVP complex, a E3 ligase complex following phosphorylation at Ser-457 by DYRK2. Ubiquitinated leads to proteasomal degradation. Post-translationally, (Microbial infection) In case of infection by HIV-1, the EDVP complex is hijacked by HIV-1 via interaction between HIV-1 Vpr and DCAF1/VPRBP, leading to ubiquitination and degradation. As to expression, expressed at a high level in thymocyte subpopulations, at an intermediate level in tonsil T-lymphocytes, and at a low to undetectable level in peripheral blood T-lymphocytes.

It localises to the nucleus. The protein localises to the nucleolus. It is found in the nucleoplasm. The protein resides in the chromosome. Its subcellular location is the telomere. It localises to the cytoplasm. The protein localises to the PML body. It catalyses the reaction DNA(n) + a 2'-deoxyribonucleoside 5'-triphosphate = DNA(n+1) + diphosphate. Telomerase is a ribonucleoprotein enzyme essential for the replication of chromosome termini in most eukaryotes. Active in progenitor and cancer cells. Inactive, or very low activity, in normal somatic cells. Catalytic component of the teleromerase holoenzyme complex whose main activity is the elongation of telomeres by acting as a reverse transcriptase that adds simple sequence repeats to chromosome ends by copying a template sequence within the RNA component of the enzyme. Catalyzes the RNA-dependent extension of 3'-chromosomal termini with the 6-nucleotide telomeric repeat unit, 5'-TTAGGG-3'. The catalytic cycle involves primer binding, primer extension and release of product once the template boundary has been reached or nascent product translocation followed by further extension. More active on substrates containing 2 or 3 telomeric repeats. Telomerase activity is regulated by a number of factors including telomerase complex-associated proteins, chaperones and polypeptide modifiers. Modulates Wnt signaling. Plays important roles in aging and antiapoptosis. In Homo sapiens (Human), this protein is Telomerase reverse transcriptase (TERT).